The chain runs to 1792 residues: D-lysergyl-peptide-synthetase subunit 3 (1792 aa).

An adenylation (A) domain region spans residues Phe239 to Arg642. One can recognise a Carrier domain in the interval Ser779 to Val853. Ser813 is subject to O-(pantetheine 4'-phosphoryl)serine. Residues Glu895–Glu1285 are condensation (C) domain. The reductase (R) domain stretch occupies residues Val1415–Ser1640.

This sequence belongs to the NRP synthetase family.

The protein operates within alkaloid biosynthesis; ergot alkaloid biosynthesis. D-lysergyl-peptide-synthetase subunit 3; part of the gene cluster that mediates the biosynthesis of fungal ergot alkaloid. DmaW catalyzes the first step of ergot alkaloid biosynthesis by condensing dimethylallyl diphosphate (DMAP) and tryptophan to form 4-dimethylallyl-L-tryptophan. The second step is catalyzed by the methyltransferase easF that methylates 4-dimethylallyl-L-tryptophan in the presence of S-adenosyl-L-methionine, resulting in the formation of 4-dimethylallyl-L-abrine. The catalase easC and the FAD-dependent oxidoreductase easE then transform 4-dimethylallyl-L-abrine to chanoclavine-I which is further oxidized by easD in the presence of NAD(+), resulting in the formation of chanoclavine-I aldehyde. Agroclavine dehydrogenase easG then mediates the conversion of chanoclavine-I aldehyde to agroclavine via a non-enzymatic adduct reaction: the substrate is an iminium intermediate that is formed spontaneously from chanoclavine-I aldehyde in the presence of glutathione. The presence of easA is not required to complete this reaction. Further conversion of agroclavine to paspalic acid is a two-step process involving oxidation of agroclavine to elymoclavine and of elymoclavine to paspalic acid, the second step being performed by the elymoclavine oxidase cloA. Paspalic acid is then further converted to D-lysergic acid. Ergopeptines are assembled from D-lysergic acid and three different amino acids by the D-lysergyl-peptide-synthetases composed each of a monomudular and a trimodular nonribosomal peptide synthetase subunit. LpsB and lpsC encode the monomodular subunits responsible for D-lysergic acid activation and incorporation into the ergopeptine backbone. LpsA1 and A2 subunits encode the trimodular nonribosomal peptide synthetase assembling the tripeptide portion of ergopeptines. LpsA1 is responsible for formation of the major ergopeptine, ergotamine, and lpsA2 for alpha-ergocryptine, the minor ergopeptine of the total alkaloid mixture elaborated by C.purpurea. D-lysergyl-tripeptides are assembled by the nonribosomal peptide synthetases and released as N-(D-lysergyl-aminoacyl)-lactams. Cyclolization of the D-lysergyl-tripeptides is performed by the Fe(2+)/2-ketoglutarate-dependent dioxygenase easH which introduces a hydroxyl group into N-(D-lysergyl-aminoacyl)-lactam at alpha-C of the aminoacyl residue followed by spontaneous condensation with the terminal lactam carbonyl group. This chain is D-lysergyl-peptide-synthetase subunit 3, found in Claviceps purpurea (strain 20.1) (Ergot fungus).